The sequence spans 155 residues: Small ribosomal subunit protein uS7c (155 aa).

This sequence belongs to the universal ribosomal protein uS7 family. Part of the 30S ribosomal subunit.

The protein localises to the plastid. The protein resides in the chloroplast. Functionally, one of the primary rRNA binding proteins, it binds directly to 16S rRNA where it nucleates assembly of the head domain of the 30S subunit. The sequence is that of Small ribosomal subunit protein uS7c (rps7) from Pinus koraiensis (Korean pine).